The chain runs to 189 residues: Glycerol-3-phosphate acyltransferase (189 aa).

The next 5 helical transmembrane spans lie at 1-21, 50-70, 72-92, 111-131, and 151-171; these read MVWL…AVLL, KLAI…VLVA, WLGL…IGHL, MLLG…LLTF, and LLAW…GLIV.

Belongs to the PlsY family. As to quaternary structure, probably interacts with PlsX.

The protein localises to the cell inner membrane. It carries out the reaction an acyl phosphate + sn-glycerol 3-phosphate = a 1-acyl-sn-glycero-3-phosphate + phosphate. It functions in the pathway lipid metabolism; phospholipid metabolism. Catalyzes the transfer of an acyl group from acyl-phosphate (acyl-PO(4)) to glycerol-3-phosphate (G3P) to form lysophosphatidic acid (LPA). This enzyme utilizes acyl-phosphate as fatty acyl donor, but not acyl-CoA or acyl-ACP. The sequence is that of Glycerol-3-phosphate acyltransferase from Pseudomonas aeruginosa (strain LESB58).